A 285-amino-acid polypeptide reads, in one-letter code: MSFERPQDPSSALEQATQDVSNLKSESRFLLEEIRASDLEFYESKKRFLNKDTQIHKFIKQHGSLVDNPKEAEFQERIKEDLERCHQLQVDKCTVANSLLYMVTKHLKKVQANIEALEEDGLLAPLEDDAVELANELSRESSVLSSGTSLERRKRTVAAGTLSAGSSLRKRVKKERGRSTQRDGMLSEPPSDEASSHGANFADDLQDFNDELFSLNQQEEDDKQLYCFCQSVSYGEMVACDGPNCKYEWFHYGCVNLDEPPKGQWYCPECRQEMANLKLKKKKRV.

Disordered regions lie at residues 1–24 (MSFE…SNLK) and 155–201 (RTVA…GANF). Polar residues predominate over residues 8–24 (DPSSALEQATQDVSNLK). The stretch at 10-36 (SSALEQATQDVSNLKSESRFLLEEIRA) forms a coiled coil. The segment at 224-273 (QLYCFCQSVSYGEMVACDGPNCKYEWFHYGCVNLDEPPKGQWYCPECRQE) adopts a PHD-type zinc-finger fold. Zn(2+) contacts are provided by C227, C229, C240, C245, H251, C254, C267, and C270.

It belongs to the ING family. In terms of assembly, interacts with H3K4me3 and to a lesser extent with H3K4me2. Component of the NuA4 histone acetyltransferase complex.

Its subcellular location is the nucleus. Functionally, component of the NuA4 histone acetyltransferase complex which is involved in transcriptional activation of selected genes principally by acetylation of nucleosomal histone H4 and H2A. The NuA4 complex is also involved in DNA repair. Involved in cell cycle progression and meiosis. This Eremothecium gossypii (strain ATCC 10895 / CBS 109.51 / FGSC 9923 / NRRL Y-1056) (Yeast) protein is Chromatin modification-related protein YNG2 (YNG2).